We begin with the raw amino-acid sequence, 333 residues long: Nuclear egress protein 1 (333 aa).

Residues 45 to 64 (SRRYKSVSRSGPSMRVRSRT) are disordered. The CCCH-type zinc finger occupies 128–251 (CLSLSGMGYH…YVIFPGKSVH (124 aa)).

This sequence belongs to the herpesviridae NEC1 protein family. As to quaternary structure, forms a heterohexameric complex with NEC2. Interacts with capsid vertex specific component 2/CVC2; this interaction directs the capsid to the host inner nuclear membrane to initiate budding. Post-translationally, phosphorylated at serine residues in the N-terminus. This phosphorylation regulates the localization within the inner nuclear membrane.

The protein localises to the host nucleus inner membrane. Functionally, plays an essential role in virion nuclear egress, the first step of virion release from infected cell. Within the host nucleus, NEC1 interacts with the newly formed capsid through the vertexes and directs it to the inner nuclear membrane by associating with NEC2. Induces the budding of the capsid at the inner nuclear membrane as well as its envelopment into the perinuclear space. There, the NEC1/NEC2 complex promotes the fusion of the enveloped capsid with the outer nuclear membrane and the subsequent release of the viral capsid into the cytoplasm where it will reach the secondary budding sites in the host Golgi or trans-Golgi network. The sequence is that of Nuclear egress protein 1 from Varicella-zoster virus (strain Dumas) (HHV-3).